Here is a 321-residue protein sequence, read N- to C-terminus: Gap junction delta-2 protein (321 aa).

The Cytoplasmic portion of the chain corresponds to 1-19; it reads MGEWTILERLLEAAVQQHS. Residues 20-42 traverse the membrane as a helical segment; it reads TMIGRILLTVVVIFRILIVAIVG. The Extracellular segment spans residues 43–75; that stretch reads ETVYDDEQTMFVCNTLQPGCNQACYDRAFPISH. The chain crosses the membrane as a helical span at residues 76–98; that stretch reads IRYWVFQIIMVCTPSLCFITYSV. At 99–197 the chain is on the cytoplasmic side; that stretch reads HQSAKQRERR…KLRRQEGISR (99 aa). The disordered stretch occupies residues 120-141; sequence PAESIGGPGGTGGGGSGGSKRE. The segment covering 125-137 has biased composition (gly residues); sequence GGPGGTGGGGSGG. The chain crosses the membrane as a helical span at residues 198 to 220; the sequence is FYIIQVVFRNALEIGFLVGQYFL. Residues 221–252 are Extracellular-facing; that stretch reads YGFSVPGLYECNRYPCIKEVECYVSRPTEKTV. Residues 253-275 form a helical membrane-spanning segment; sequence FLVFMFAVSGICVVLNLAELNHL. The Cytoplasmic portion of the chain corresponds to 276-321; the sequence is GWRKIKLAVRGAQAKRKSVYEIRNKDLPRVSVPNFGRTQSSDSAYV.

Belongs to the connexin family. Delta-type subfamily. In terms of assembly, a connexon is composed of a hexamer of connexins. In terms of tissue distribution, highly expressed in neurons.

The protein resides in the cell membrane. Its subcellular location is the cell junction. The protein localises to the gap junction. Functionally, one gap junction consists of a cluster of closely packed pairs of transmembrane channels, the connexons, through which materials of low MW diffuse from one cell to a neighboring cell. The chain is Gap junction delta-2 protein (Gjd2) from Rattus norvegicus (Rat).